Here is a 362-residue protein sequence, read N- to C-terminus: MPSTLQVLAKKVLALEHKENDHISREYYYHILKCCGLWWHEAPIILCFNGSKQMMIKTPIFEEGILLNTALMKAVQDNNYELIKLFTEWGANINYGLVSINTEHTRDLCRKLGAKEMLERNEVIQIIFKTLDDTTSSNMILCHELFTNNPLLENVNMGEMRMIIHWKMKNLTDLLLDNNSISEILTKFWYGIAVKYNLKDAIQYFYQRFINFNEWRVTCALSFNNVNDLHKMYITEKVHMNNDEMMNLACSIQDKNFSTIYYCFLLGANINQAMFTSVSNYNVFNIFFCIDLGADAFEEGKALAKQKGYNEIVEILSLDIIYSPNTDFLSKIKPEHISFLLKNFYPKNLYIFDRCKPGLYYP.

This sequence belongs to the asfivirus MGF 360 family.

In terms of biological role, plays a role in virus cell tropism, and may be required for efficient virus replication in macrophages. The sequence is that of Protein MGF 360-18R from African swine fever virus (isolate Warthog/Namibia/Wart80/1980) (ASFV).